The sequence spans 292 residues: 4-hydroxy-tetrahydrodipicolinate synthase (292 aa).

Thr45 serves as a coordination point for pyruvate. Tyr133 serves as the catalytic Proton donor/acceptor. Lys161 functions as the Schiff-base intermediate with substrate in the catalytic mechanism. Ile203 contributes to the pyruvate binding site.

The protein belongs to the DapA family. In terms of assembly, homotetramer; dimer of dimers.

It localises to the cytoplasm. It catalyses the reaction L-aspartate 4-semialdehyde + pyruvate = (2S,4S)-4-hydroxy-2,3,4,5-tetrahydrodipicolinate + H2O + H(+). The protein operates within amino-acid biosynthesis; L-lysine biosynthesis via DAP pathway; (S)-tetrahydrodipicolinate from L-aspartate: step 3/4. Its function is as follows. Catalyzes the condensation of (S)-aspartate-beta-semialdehyde [(S)-ASA] and pyruvate to 4-hydroxy-tetrahydrodipicolinate (HTPA). This Salmonella paratyphi A (strain AKU_12601) protein is 4-hydroxy-tetrahydrodipicolinate synthase.